We begin with the raw amino-acid sequence, 564 residues long: Probable diguanylate cyclase DgcQ (564 aa).

2 helical membrane-spanning segments follow: residues 20–40 (LGPGHVVNLCFIVVLLFSTLL) and 360–380 (IALTLLWALFTTMLLISWYVI). A GGDEF domain is found at 428–563 (HPFSVIQVDL…GRNRVFASDN (136 aa)). D436 is a Mg(2+) binding site. Substrate is bound by residues N444, H449, and D453. Mg(2+) is bound at residue E479. E479 (proton acceptor) is an active-site residue.

As to quaternary structure, homodimer. Mg(2+) serves as cofactor.

It localises to the cell inner membrane. The catalysed reaction is 2 GTP = 3',3'-c-di-GMP + 2 diphosphate. It functions in the pathway glycan metabolism; bacterial cellulose biosynthesis. The protein operates within purine metabolism; 3',5'-cyclic di-GMP biosynthesis. Its function is as follows. Catalyzes the synthesis of cyclic-di-GMP (c-di-GMP) via the condensation of 2 GTP molecules. Cyclic-di-GMP is a second messenger which controls cell surface-associated traits in bacteria. Involved in the regulation of cellulose production. This Escherichia coli (strain K12) protein is Probable diguanylate cyclase DgcQ.